We begin with the raw amino-acid sequence, 90 residues long: Molybdopterin synthase sulfur carrier subunit (90 aa).

At Gly-90 the chain carries 1-thioglycine; alternate. Glycyl adenylate; alternate is present on Gly-90.

It belongs to the MoaD family. MOCS2A subfamily. Heterotetramer; composed of 2 small (Mocs2A) and 2 large (Mocs2B) subunits. In terms of processing, C-terminal thiocarboxylation occurs in 2 steps, it is first acyl-adenylated (-COAMP) via the hesA/moeB/thiF part of MOCS3, then thiocarboxylated (-COSH) via the rhodanese domain of MOCS3.

The protein resides in the cytoplasm. Its pathway is cofactor biosynthesis; molybdopterin biosynthesis. In terms of biological role, acts as a sulfur carrier required for molybdopterin biosynthesis. Component of the molybdopterin synthase complex that catalyzes the conversion of precursor Z into molybdopterin by mediating the incorporation of 2 sulfur atoms into precursor Z to generate a dithiolene group. In the complex, serves as sulfur donor by being thiocarboxylated (-COSH) at its C-terminus by MOCS3. After interaction with Mocs2B, the sulfur is then transferred to precursor Z to form molybdopterin. Involved during biosynthesis of the molybdenum cofactor. In Drosophila melanogaster (Fruit fly), this protein is Molybdopterin synthase sulfur carrier subunit.